The following is a 138-amino-acid chain: MLQPARRKYRKEQKGRNTGVATRGNSVAFGDFGLKCTDRGRLTARQIEAARRAISRHVKRGGRIWIRVFPDKPISQKPAEVRMGNGKGNPEYYVAEIQPGKIVFEIVGVPEELAREAFRLASAKLPLRTTFVSRMIGQ.

Positions 1-13 (MLQPARRKYRKEQ) are enriched in basic residues. The interval 1–22 (MLQPARRKYRKEQKGRNTGVAT) is disordered.

This sequence belongs to the universal ribosomal protein uL16 family. As to quaternary structure, part of the 50S ribosomal subunit.

Its function is as follows. Binds 23S rRNA and is also seen to make contacts with the A and possibly P site tRNAs. The sequence is that of Large ribosomal subunit protein uL16 from Polaromonas sp. (strain JS666 / ATCC BAA-500).